The primary structure comprises 180 residues: Inosine/xanthosine triphosphatase (180 aa).

8–13 (TTNPAK) contacts substrate. Aspartate 38 lines the Mg(2+) pocket.

The protein belongs to the YjjX NTPase family. As to quaternary structure, homodimer. Requires Mg(2+) as cofactor. Mn(2+) serves as cofactor.

It catalyses the reaction XTP + H2O = XDP + phosphate + H(+). The enzyme catalyses ITP + H2O = IDP + phosphate + H(+). Its function is as follows. Phosphatase that hydrolyzes non-canonical purine nucleotides such as XTP and ITP to their respective diphosphate derivatives. Probably excludes non-canonical purines from DNA/RNA precursor pool, thus preventing their incorporation into DNA/RNA and avoiding chromosomal lesions. The sequence is that of Inosine/xanthosine triphosphatase from Yersinia pseudotuberculosis serotype O:1b (strain IP 31758).